The sequence spans 476 residues: Aspartyl/glutamyl-tRNA(Asn/Gln) amidotransferase subunit B (476 aa).

It belongs to the GatB/GatE family. GatB subfamily. Heterotrimer of A, B and C subunits.

The catalysed reaction is L-glutamyl-tRNA(Gln) + L-glutamine + ATP + H2O = L-glutaminyl-tRNA(Gln) + L-glutamate + ADP + phosphate + H(+). The enzyme catalyses L-aspartyl-tRNA(Asn) + L-glutamine + ATP + H2O = L-asparaginyl-tRNA(Asn) + L-glutamate + ADP + phosphate + 2 H(+). In terms of biological role, allows the formation of correctly charged Asn-tRNA(Asn) or Gln-tRNA(Gln) through the transamidation of misacylated Asp-tRNA(Asn) or Glu-tRNA(Gln) in organisms which lack either or both of asparaginyl-tRNA or glutaminyl-tRNA synthetases. The reaction takes place in the presence of glutamine and ATP through an activated phospho-Asp-tRNA(Asn) or phospho-Glu-tRNA(Gln). The chain is Aspartyl/glutamyl-tRNA(Asn/Gln) amidotransferase subunit B from Bacillus pumilus (strain SAFR-032).